The primary structure comprises 711 residues: Progesterone receptor (711 aa).

The segment at 1 to 347 (MEDKSKQCLQ…YGFDALPRKI (347 aa)) is modulating, Pro-Rich. NR C4-type zinc fingers lie at residues 348–368 (CLIC…CGSC) and 384–408 (CAGR…LKKC). Residues 348–420 (CLICSDEASG…AGMVLGGRKF (73 aa)) constitute a DNA-binding region (nuclear receptor). The NR LBD domain occupies 457 to 691 (QEVQYFPELL…EFPEMMTEVI (235 aa)).

Belongs to the nuclear hormone receptor family. NR3 subfamily. In terms of tissue distribution, expressed in all tissues examined: highly expressed in testis and brain. Also expressed in heart, lung, liver, kidney, stomach and small intestine.

Its subcellular location is the nucleus. Its function is as follows. The steroid hormones and their receptors are involved in the regulation of eukaryotic gene expression and affect cellular proliferation and differentiation in target tissues. In Rana dybowskii (Dybovsky's frog), this protein is Progesterone receptor (pgr).